Here is a 695-residue protein sequence, read N- to C-terminus: Elongation factor G (695 aa).

The region spanning 12 to 286 (DKIRNIGIMA…AVIDYLPSPL (275 aa)) is the tr-type G domain. GTP is bound by residues 21-28 (AHIDAGKT), 85-89 (DTPGH), and 139-142 (NKMD).

This sequence belongs to the TRAFAC class translation factor GTPase superfamily. Classic translation factor GTPase family. EF-G/EF-2 subfamily.

The protein resides in the cytoplasm. Catalyzes the GTP-dependent ribosomal translocation step during translation elongation. During this step, the ribosome changes from the pre-translocational (PRE) to the post-translocational (POST) state as the newly formed A-site-bound peptidyl-tRNA and P-site-bound deacylated tRNA move to the P and E sites, respectively. Catalyzes the coordinated movement of the two tRNA molecules, the mRNA and conformational changes in the ribosome. The polypeptide is Elongation factor G (Thermotoga neapolitana (strain ATCC 49049 / DSM 4359 / NBRC 107923 / NS-E)).